The primary structure comprises 517 residues: Cytochrome P450 78A5 (517 aa).

Residues 20-40 (AFASVSLIIATVAFLLSPGGL) traverse the membrane as a helical segment. Cys-459 contributes to the heme binding site.

The protein belongs to the cytochrome P450 family. Heme serves as cofactor. In terms of tissue distribution, expressed in the periphery of the shoot apical meristem and inflorescence meristem, on the adaxial sides of developing floral organs and in developing ovules in the region where the integuments emerge.

The protein resides in the membrane. Its function is as follows. Plays a role in regulating directional growth at the meristem/organ boundary. Is required for the promotion of leaf and floral organ growth and for the prolongation of the plastochron. Promotes organ growth in a non-cell-autonomous manner and may generate a mobile growth signal distinct from the classical phytohormones that prevents premature arrest of proliferation, until the correct primordium size has been reached. Functions probably in association with CYP78A7 in regulating relative growth of the shoot apical meristem and plant organs. Is required locally in developing ovules to stimulates cell proliferation and promote seed growth. The polypeptide is Cytochrome P450 78A5 (CYP78A5) (Arabidopsis thaliana (Mouse-ear cress)).